Reading from the N-terminus, the 499-residue chain is FAD-dependent oxidoreductase domain-containing protein 1 (499 aa).

The chain crosses the membrane as a helical span at residues 75 to 95 (ERADVVIVGGGVMGWSIAYWL).

FAD is required as a cofactor.

It is found in the mitochondrion inner membrane. Its function is as follows. Required for the assembly of the mitochondrial membrane respiratory chain NADH dehydrogenase (Complex I). Involved in mid-late stages of complex I assembly. The chain is FAD-dependent oxidoreductase domain-containing protein 1 (foxred1) from Xenopus laevis (African clawed frog).